Reading from the N-terminus, the 738-residue chain is DNA topoisomerase 4 subunit A (738 aa).

One can recognise a Topo IIA-type catalytic domain in the interval 32–496; that stretch reads LPDVRDGLKP…SFEEVTLTNQ (465 aa). The active-site O-(5'-phospho-DNA)-tyrosine intermediate is the tyrosine 120.

This sequence belongs to the type II topoisomerase GyrA/ParC subunit family. ParC type 1 subfamily. Heterotetramer composed of ParC and ParE.

It localises to the cell membrane. The catalysed reaction is ATP-dependent breakage, passage and rejoining of double-stranded DNA.. Functionally, topoisomerase IV is essential for chromosome segregation. It relaxes supercoiled DNA. Performs the decatenation events required during the replication of a circular DNA molecule. The chain is DNA topoisomerase 4 subunit A from Rickettsia conorii (strain ATCC VR-613 / Malish 7).